Consider the following 213-residue polypeptide: Uridine kinase (213 aa).

13 to 20 is an ATP binding site; it reads GASASGKS.

The protein belongs to the uridine kinase family.

The protein resides in the cytoplasm. It carries out the reaction uridine + ATP = UMP + ADP + H(+). It catalyses the reaction cytidine + ATP = CMP + ADP + H(+). The protein operates within pyrimidine metabolism; CTP biosynthesis via salvage pathway; CTP from cytidine: step 1/3. Its pathway is pyrimidine metabolism; UMP biosynthesis via salvage pathway; UMP from uridine: step 1/1. The chain is Uridine kinase from Histophilus somni (strain 129Pt) (Haemophilus somnus).